Here is a 340-residue protein sequence, read N- to C-terminus: Fructose import permease protein FruG (340 aa).

The next 9 membrane-spanning stretches (helical) occupy residues 23 to 43 (IPTLAAVVIFILMIIMGQALF), 49 to 69 (LGFISSLFIDHAYLIILAVAM), 73 to 93 (ILTGGIDLSVGAIVAITAVVG), 101 to 121 (VPAFLVMIIMLLIGAVFGLLA), 130 to 150 (MQPFIATLSTMFLARGLASII), 182 to 202 (LSFNVGVIIALVVVVFGYVFL), 234 to 254 (IIYLTSATLAALASIVYTANI), 273 to 293 (VVIGGTIITGGFGYVLGSVLG), and 307 to 327 (FGVPAEWTTIVIGLMILVFVV).

Belongs to the binding-protein-dependent transport system permease family. As to quaternary structure, the complex is composed of an ATP-binding protein (FruK), two transmembrane proteins (FruF and FruG) and a solute-binding protein (FruE).

It localises to the cell membrane. In terms of biological role, part of the high-affinity ABC transporter complex FruEKFG involved in fructose uptake. Can also transport ribose and xylose, with lower affinity. Probably responsible for the translocation of the substrate across the membrane. This Bifidobacterium longum (strain NCC 2705) protein is Fructose import permease protein FruG.